The primary structure comprises 531 residues: MERLAGKIILLSGASRAFVGFLAGLLAMFAQPPFGIFAAAFISFPMLVWLIDGVATHPDEGVVRRLLPAASIGWSFGFGYFLGGLWWLGNAFLVEADLFAWAMPLAVVGLPAVLALFYALAVLVARCLWSDGVGRIAALAVGFGVAEWLRSFLFTGFPWNAIGYAAMPMPLMMQSASVLNVATINMLAVFVFAAPALIGTGKGARVGLAVAAALFAAHIGYGYYRLSLPPPQPLTPERTVRLVQPVIDQAKKMDDRERAVIFEEHLALTAAPPQAGGKRPDIVVWPETSIPFILTDNPDALARIADVLQDGQILVAGAVRAEDAGTGLPPRYYNSIYVIDDRGQIVGASDKVHLVPFGEYLPFEDVLNSWGLSSIAANMPGGFSAASNRSVLTLPGGRTFYPLICYEAIFADEVDGSARLSDALLNVTNDAWFGDTPGPRQHFHQAQLRTIETGLPMIRAANTGISAIVDARGVLVVGLGYNYKGVTDAILPGKMPTMTDSMLRGRIFWFTGVFLLLVAAISRRGLNFRTN.

The next 7 membrane-spanning stretches (helical) occupy residues 8–28, 34–54, 74–94, 105–125, 128–148, 178–198, and 206–226; these read IILL…LLAM, FGIF…IDGV, WSFG…AFLV, LAVV…VLVA, LWSD…VAEW, VLNV…PALI, and VGLA…YYRL. One can recognise a CN hydrolase domain in the interval 243–493; the sequence is VQPVIDQAKK…KGVTDAILPG (251 aa). The active-site Proton acceptor is the Glu-287. Residue Lys-351 is part of the active site. The active-site Nucleophile is the Cys-405. Residues 501–521 form a helical membrane-spanning segment; the sequence is SMLRGRIFWFTGVFLLLVAAI.

It belongs to the CN hydrolase family. Apolipoprotein N-acyltransferase subfamily.

The protein resides in the cell inner membrane. The enzyme catalyses N-terminal S-1,2-diacyl-sn-glyceryl-L-cysteinyl-[lipoprotein] + a glycerophospholipid = N-acyl-S-1,2-diacyl-sn-glyceryl-L-cysteinyl-[lipoprotein] + a 2-acyl-sn-glycero-3-phospholipid + H(+). It functions in the pathway protein modification; lipoprotein biosynthesis (N-acyl transfer). Catalyzes the phospholipid dependent N-acylation of the N-terminal cysteine of apolipoprotein, the last step in lipoprotein maturation. The protein is Apolipoprotein N-acyltransferase of Sinorhizobium fredii (strain NBRC 101917 / NGR234).